We begin with the raw amino-acid sequence, 458 residues long: Bifunctional thioredoxin reductase/thioredoxin (458 aa).

Residues 1–321 form a thioredoxin reductase region; that stretch reads MNTTPSAHET…LAEHAGSKAN (321 aa). FAD-binding positions include 19 to 22, 41 to 48, asparagine 57, and valine 90; these read SGPA and EGTSFGGA. Cysteine 142 and cysteine 145 form a disulfide bridge. NADP(+) contacts are provided by serine 163, histidine 182, arginine 188, isoleucine 245, and tyrosine 265. FAD contacts are provided by residues aspartate 285 and 292-295; that span reads RQAI. Residue arginine 292 coordinates NADP(+). The tract at residues 322-347 is linker; that stretch reads ETTEETGDVDSTDTTDWSTAMTDAKN. In terms of domain architecture, Thioredoxin spans 341 to 455; sequence AMTDAKNAGV…LLRDLSDVVP (115 aa). An intrachain disulfide couples cysteine 379 to cysteine 382.

The protein in the N-terminal section; belongs to the class-II pyridine nucleotide-disulfide oxidoreductase family. In terms of assembly, homodimer. It depends on FAD as a cofactor.

The protein resides in the cytoplasm. The catalysed reaction is [thioredoxin]-dithiol + NADP(+) = [thioredoxin]-disulfide + NADPH + H(+). The sequence is that of Bifunctional thioredoxin reductase/thioredoxin (trxB/A) from Mycobacterium leprae (strain TN).